A 417-amino-acid chain; its full sequence is Probable metalloprotease arx1 (417 aa).

The protein belongs to the peptidase M24 family. Component of the nucleoplasmic and cytoplasmic pre-60S ribosomal particles.

It is found in the cytoplasm. The protein resides in the nucleus. Functionally, probable metalloprotease involved in proper assembly of pre-ribosomal particles during the biogenesis of the 60S ribosomal subunit. Accompanies the pre-60S particles to the cytoplasm. This is Probable metalloprotease arx1 (arx1) from Schizosaccharomyces pombe (strain 972 / ATCC 24843) (Fission yeast).